A 143-amino-acid chain; its full sequence is Large ribosomal subunit protein uL16 (143 aa).

It belongs to the universal ribosomal protein uL16 family. As to quaternary structure, part of the 50S ribosomal subunit.

Binds 23S rRNA and is also seen to make contacts with the A and possibly P site tRNAs. The sequence is that of Large ribosomal subunit protein uL16 from Thermosynechococcus vestitus (strain NIES-2133 / IAM M-273 / BP-1).